The sequence spans 186 residues: Adenylate kinase (186 aa).

11-16 (GAGKGT) contributes to the ATP binding site. The segment at 31-60 (STGDILRAAVKNGTAMGIEAKKYMDAGDLV) is NMP. AMP-binding positions include Thr-32, Arg-37, 58 to 60 (DLV), 86 to 89 (GFPR), and Gln-93. Residues 127–137 (GRAIKEGRSDD) are LID. Arg-128 contributes to the ATP binding site. AMP is bound by residues Arg-134 and Arg-145. Gly-173 lines the ATP pocket.

This sequence belongs to the adenylate kinase family. Monomer.

It is found in the cytoplasm. The enzyme catalyses AMP + ATP = 2 ADP. Its pathway is purine metabolism; AMP biosynthesis via salvage pathway; AMP from ADP: step 1/1. Functionally, catalyzes the reversible transfer of the terminal phosphate group between ATP and AMP. Plays an important role in cellular energy homeostasis and in adenine nucleotide metabolism. The polypeptide is Adenylate kinase (Leptospira biflexa serovar Patoc (strain Patoc 1 / Ames)).